The sequence spans 292 residues: Elongation factor Ts (292 aa).

The tract at residues Thr-80–Val-83 is involved in Mg(2+) ion dislocation from EF-Tu.

It belongs to the EF-Ts family.

Its subcellular location is the cytoplasm. In terms of biological role, associates with the EF-Tu.GDP complex and induces the exchange of GDP to GTP. It remains bound to the aminoacyl-tRNA.EF-Tu.GTP complex up to the GTP hydrolysis stage on the ribosome. This is Elongation factor Ts from Oenococcus oeni (strain ATCC BAA-331 / PSU-1).